The primary structure comprises 485 residues: Probable L-xylulose kinase (485 aa).

It belongs to the FGGY kinase family. Homodimer.

It carries out the reaction L-xylulose + ATP = L-xylulose 5-phosphate + ADP + H(+). This chain is Probable L-xylulose kinase (lyx), found in Haemophilus influenzae (strain ATCC 51907 / DSM 11121 / KW20 / Rd).